We begin with the raw amino-acid sequence, 396 residues long: MSVRLVLAKGREKSLLRRHPWVFSGAVARMEGKASLGETIDIVDHQGKWLARGAYSPASQIRARVWTFDPSESIDIAFFSRRLQQAQKWRDWLAQKDGLDSYRLIAGESDGLPGITIDRFGNFLVLQLLSAGAEYQRAALISALQTLYPECSIYDRSDVAVRKKEGMELTQGPVTGELPPALLPIEEHGMKLLVDIQHGHKTGYYLDQRDSRLATRRYVENKRVLNCFSYTGGFAVSALMGGCSQVVSVDTSQEALDIARQNVELNKLDLSKAEFVRDDVFKLLRTYRDRGEKFDVIVMDPPKFVENKSQLMGACRGYKDINMLAIQLLNEGGILLTFSCSGLMTSDLFQKIIADAAIDAGRDVQFIEQFRQAADHPVIATYPEGLYLKGFACRVM.

The PUA domain maps to 2 to 81 (SVRLVLAKGR…ESIDIAFFSR (80 aa)).

It belongs to the methyltransferase superfamily. RlmI family.

It localises to the cytoplasm. The catalysed reaction is cytidine(1962) in 23S rRNA + S-adenosyl-L-methionine = 5-methylcytidine(1962) in 23S rRNA + S-adenosyl-L-homocysteine + H(+). Functionally, specifically methylates the cytosine at position 1962 (m5C1962) of 23S rRNA. The chain is Ribosomal RNA large subunit methyltransferase I from Escherichia coli (strain K12 / MC4100 / BW2952).